A 99-amino-acid chain; its full sequence is Small integral membrane protein 14 (99 aa).

At 1–49 (MAEGGFDPCECICSHEHAMRRLINLLRQSQSYCTDTECLRELPGPSGDS) the chain is on the lumenal side. The chain crosses the membrane as a helical span at residues 50 to 70 (GISITVILMAWMVIAVLLFLL). At 71–99 (RPPNLRGSSLPGKPSSPHSGQDPPAPPVD) the chain is on the cytoplasmic side. Positions 77-99 (GSSLPGKPSSPHSGQDPPAPPVD) are disordered.

The protein localises to the endoplasmic reticulum membrane. In Rattus norvegicus (Rat), this protein is Small integral membrane protein 14 (Smim14).